The primary structure comprises 151 residues: S-protein homolog 1 (151 aa).

An N-terminal signal peptide occupies residues M1–T18.

Belongs to the plant self-incompatibility (S1) protein family. As to expression, restricted to floral tissues.

Its subcellular location is the secreted. This chain is S-protein homolog 1, found in Arabidopsis thaliana (Mouse-ear cress).